The sequence spans 734 residues: Photosystem I P700 chlorophyll a apoprotein A2 (734 aa).

Helical transmembrane passes span I46 to A69, L135 to Q158, L175 to I199, M273 to Y291, I330 to Y353, A369 to I395, A417 to H439, and F517 to V535. 2 residues coordinate [4Fe-4S] cluster: C559 and C568. 2 helical membrane passes run A575 to W596 and L643 to I665. H654, M662, and Y670 together coordinate chlorophyll a. A phylloquinone-binding site is contributed by W671. A helical membrane pass occupies residues L707–A727.

This sequence belongs to the PsaA/PsaB family. As to quaternary structure, the PsaA/B heterodimer binds the P700 chlorophyll special pair and subsequent electron acceptors. PSI consists of a core antenna complex that captures photons, and an electron transfer chain that converts photonic excitation into a charge separation. The eukaryotic PSI reaction center is composed of at least 11 subunits. The cofactor is P700 is a chlorophyll a/chlorophyll a' dimer, A0 is one or more chlorophyll a, A1 is one or both phylloquinones and FX is a shared 4Fe-4S iron-sulfur center..

Its subcellular location is the plastid. It localises to the chloroplast thylakoid membrane. It catalyses the reaction reduced [plastocyanin] + hnu + oxidized [2Fe-2S]-[ferredoxin] = oxidized [plastocyanin] + reduced [2Fe-2S]-[ferredoxin]. Its function is as follows. PsaA and PsaB bind P700, the primary electron donor of photosystem I (PSI), as well as the electron acceptors A0, A1 and FX. PSI is a plastocyanin-ferredoxin oxidoreductase, converting photonic excitation into a charge separation, which transfers an electron from the donor P700 chlorophyll pair to the spectroscopically characterized acceptors A0, A1, FX, FA and FB in turn. Oxidized P700 is reduced on the lumenal side of the thylakoid membrane by plastocyanin. The protein is Photosystem I P700 chlorophyll a apoprotein A2 of Triticum aestivum (Wheat).